We begin with the raw amino-acid sequence, 1063 residues long: Lysine-specific demethylase phf2 (1063 aa).

The PHD-type zinc finger occupies 5 to 56 (PVYCICRLPYDVTQFMIECDACKDWFHGSCVGVDEDEAPDIDIYHCPNCEKT). The JmjC domain maps to 197-353 (FSDARMANIV…MQMRAYEVEK (157 aa)). Threonine 246 lines the 2-oxoglutarate pocket. Fe cation contacts are provided by histidine 249 and glutamate 251. 2-oxoglutarate is bound by residues tyrosine 259 and lysine 266. Asparagine 321 is a binding site for Fe cation. Disordered stretches follow at residues 448 to 546 (VSDS…LAAL), 704 to 761 (NIKE…SAGI), 773 to 864 (GIDY…DMFD), and 879 to 1045 (YVYP…MATA). Residues 460–477 (SEPSNSKPPAEEPPSALS) show a composition bias toward low complexity. 2 stretches are compositionally biased toward basic and acidic residues: residues 513–540 (PPKEPKIKEGGKKKAKKVKEGVIPEKKP) and 723–745 (KSPDTSDEESLHIDTEAKTDVKG). Over residues 746–755 (RNSKVSKKKG) the composition is skewed to basic residues. A compositionally biased stretch (polar residues) spans 776–791 (YSNNSQPPASPSTQEA). Residues 813–833 (SNSQAKNNSHSSAASKKPSGA) are compositionally biased toward low complexity. Residues 842–852 (RPAKRLPKKTQ) show a composition bias toward basic residues. Basic and acidic residues predominate over residues 920–929 (RQERPAREGA). The span at 953–964 (IKKKKKSAKKKP) shows a compositional bias: basic residues. The segment covering 965 to 975 (IVAEESHKLSH) has biased composition (basic and acidic residues). Low complexity-rich tracts occupy residues 976–988 (DSSSPEPTPDSES) and 1021–1031 (SSSSSSQNASS). At serine 1021 the chain carries Phosphoserine; by PKA.

Belongs to the JHDM1 histone demethylase family. JHDM1D subfamily.

The protein localises to the nucleus. It is found in the nucleolus. Its subcellular location is the chromosome. The protein resides in the centromere. It localises to the kinetochore. Functionally, lysine demethylase that demethylates both histones and non-histone proteins. Mediates demethylation of dimethylated 'Lys-9' of histone H3 (H3K9me2). Recruited to trimethylated 'Lys-4' of histone H3 (H3K4me3) at rDNA promoters and promotes expression of rDNA. This chain is Lysine-specific demethylase phf2 (phf2), found in Danio rerio (Zebrafish).